The primary structure comprises 78 residues: UPF0291 protein ABC2165 (78 aa).

The disordered stretch occupies residues 56-78 (AKGNDVTPQKLKDSKAQKHKRLH).

This sequence belongs to the UPF0291 family.

The protein resides in the cytoplasm. The sequence is that of UPF0291 protein ABC2165 from Shouchella clausii (strain KSM-K16) (Alkalihalobacillus clausii).